The sequence spans 603 residues: MAHAQELTPEALAGLRERYRRERERRVRPDGTRQYLGADAEFGFYAADPWAGESDVREPVRDRVDVAVVGGGFGGVLAGARLRQQGVARVRVVEKGGDFGGTWYWNRYPGIHCDIEAHVYLPMLDETGYVPEWKYAPGEEIRRHAMRIAETFDLYTDVLFSTAVTSLSWDDTTGEWIVETDRHDAFRATYVITATGVLSELKLPGIPGIERFKGHTFHTSRWDYAYTGGGPDGGLTGLADKRVGVVGTGATGVQVIPKLAEDAGQLHVFQRTPSSVDVRANRRTTARDVGADRAGWASERRDNFLRVVSGEAVEEDLVADRWTATAGLLEKLLPSFRRPDDLAAFEAAYEVADAARMNDIRARVDDLVTDPATADRLKPWYRYACKRPTFSDLYLQAFNRDNVTLVDTADTHGIERMNERGVVVGDTEYPLDCLVFATGFSVGVSGVHSGRLPVRGRGGVRLRDAWSARGPRTLHGLTSNGFPNLIQLGGVQSASSVNHTHVLDEHAVHGAALVAAAEAKGAVVEPTREAEDAWIATLAEHAPDHAWFHAECTPGYYNAEGRGRPNGPTAYPHGAAAFHELLRRWREESMDELLAPRARVRAC.

Residues E94, 102 to 105, D114, Y120, and V164 contribute to the FAD site; that span reads TWYW. 112–114 serves as a coordination point for NADP(+); it reads HCD. NADP(+)-binding positions include 248-254, 271-272, and 386-387; these read TGATGVQ, RT, and KR.

It belongs to the FAD-binding monooxygenase family. It depends on FAD as a cofactor.

In terms of biological role, catalyzes a Baeyer-Villiger oxidation reaction, i.e. the insertion of an oxygen atom into a carbon-carbon bond adjacent to a carbonyl, which converts ketones to esters or lactones using NADPH and/or NADH as an electron donor. Thus, can convert bicyclo[3.2.0]hept-2-en-6-one into the oxidative lactone products 2-oxabicyclo[3.3.0]oct-6-en-3-one and 3-oxabicyclo[3.3.0]oct-6-en-2-one. Is also able to catalyze the sulfoxidation of methyl phenyl sulfide (thioanisole). The polypeptide is Baeyer-Villiger monooxygenase (Streptomyces coelicolor (strain ATCC BAA-471 / A3(2) / M145)).